The chain runs to 295 residues: Acetyl-coenzyme A carboxylase carboxyl transferase subunit beta (295 aa).

A disordered region spans residues 1–20 (MSWLSKLMPSGIRTENTPAK). The CoA carboxyltransferase N-terminal domain occupies 28-295 (LWEKCSNCGS…QPHPQDADAA (268 aa)). Zn(2+) is bound by residues cysteine 32, cysteine 35, cysteine 51, and cysteine 54. Residues 32–54 (CSNCGSALYGPELEENLEVCPKC) form a C4-type zinc finger.

This sequence belongs to the AccD/PCCB family. Acetyl-CoA carboxylase is a heterohexamer composed of biotin carboxyl carrier protein (AccB), biotin carboxylase (AccC) and two subunits each of ACCase subunit alpha (AccA) and ACCase subunit beta (AccD). The cofactor is Zn(2+).

It localises to the cytoplasm. The catalysed reaction is N(6)-carboxybiotinyl-L-lysyl-[protein] + acetyl-CoA = N(6)-biotinyl-L-lysyl-[protein] + malonyl-CoA. It participates in lipid metabolism; malonyl-CoA biosynthesis; malonyl-CoA from acetyl-CoA: step 1/1. Component of the acetyl coenzyme A carboxylase (ACC) complex. Biotin carboxylase (BC) catalyzes the carboxylation of biotin on its carrier protein (BCCP) and then the CO(2) group is transferred by the transcarboxylase to acetyl-CoA to form malonyl-CoA. This is Acetyl-coenzyme A carboxylase carboxyl transferase subunit beta from Xanthomonas campestris pv. campestris (strain B100).